Consider the following 103-residue polypeptide: uncharacterized protein (103 aa).

3 consecutive transmembrane segments (helical) span residues 1–21, 29–49, and 69–89; these read MPGV…VFLS, IAFI…TGYF, and VVEW…GLLF.

The protein resides in the cell membrane. This is an uncharacterized protein from Methanocaldococcus jannaschii (strain ATCC 43067 / DSM 2661 / JAL-1 / JCM 10045 / NBRC 100440) (Methanococcus jannaschii).